Here is a 285-residue protein sequence, read N- to C-terminus: SLAM family member 8 (285 aa).

The N-terminal stretch at 1-22 (MVMRPLWSLLLWEALLPITVTG) is a signal peptide. Residues 23 to 233 (AQVLSKVGGS…AAPGKASYKD (211 aa)) lie on the Extracellular side of the membrane. N-linked (GlcNAc...) asparagine glycosylation is present at Asn85. Residues 128–215 (PVVQVFIAVE…PVSWDLATVT (88 aa)) enclose the Ig-like C2-type domain. A disulfide bridge links Cys152 with Cys201. Residues 234–254 (VLLVVVPVSLLLMLVTLFSAW) traverse the membrane as a helical segment. The Cytoplasmic segment spans residues 255 to 285 (HWCPCSGKKKKDVHADRVGPETENPLVQDLP). A disordered region spans residues 262 to 285 (KKKKDVHADRVGPETENPLVQDLP).

In terms of tissue distribution, expressed in lymph node, spleen, thymus and bone marrow.

Its subcellular location is the membrane. Functionally, may play a role in B-lineage commitment and/or modulation of signaling through the B-cell receptor. The polypeptide is SLAM family member 8 (SLAMF8) (Homo sapiens (Human)).